The sequence spans 511 residues: Histidine ammonia-lyase (511 aa).

The 5-imidazolinone (Ala-Gly) cross-link spans 142–144 (ASG). Serine 143 is subject to 2,3-didehydroalanine (Ser).

The protein belongs to the PAL/histidase family. Contains an active site 4-methylidene-imidazol-5-one (MIO), which is formed autocatalytically by cyclization and dehydration of residues Ala-Ser-Gly.

The protein resides in the cytoplasm. It catalyses the reaction L-histidine = trans-urocanate + NH4(+). It participates in amino-acid degradation; L-histidine degradation into L-glutamate; N-formimidoyl-L-glutamate from L-histidine: step 1/3. This is Histidine ammonia-lyase from Brucella suis biovar 1 (strain 1330).